The primary structure comprises 217 residues: MKENTLIVRQLGRQRYLPIWQKMQDFTDTRDDDSADEIWLVEHESVFTQGQAGKDEHLLAPGDIEVIKVDRGGQVTYHGPGQQMMYVLFNLRRLKIGVRELVTWLEECIIESLAEYDIQAYAKADAPGVYVNDSKIASLGLRVRRGCSFHGLALNVNMDLSPFLRINPCGYAGMNMVQTKELKGPQNLETAGAGLVKHMIKKLNATQVKHTEGFENE.

The BPL/LPL catalytic domain maps to 32 to 207; sequence DDSADEIWLV…HMIKKLNATQ (176 aa). Residues 71 to 78, 138 to 140, and 151 to 153 contribute to the substrate site; these read RGGQVTYH, SLG, and GLA. The active-site Acyl-thioester intermediate is the cysteine 169.

This sequence belongs to the LipB family.

It is found in the cytoplasm. The enzyme catalyses octanoyl-[ACP] + L-lysyl-[protein] = N(6)-octanoyl-L-lysyl-[protein] + holo-[ACP] + H(+). The protein operates within protein modification; protein lipoylation via endogenous pathway; protein N(6)-(lipoyl)lysine from octanoyl-[acyl-carrier-protein]: step 1/2. Functionally, catalyzes the transfer of endogenously produced octanoic acid from octanoyl-acyl-carrier-protein onto the lipoyl domains of lipoate-dependent enzymes. Lipoyl-ACP can also act as a substrate although octanoyl-ACP is likely to be the physiological substrate. The polypeptide is Octanoyltransferase (Pseudoalteromonas translucida (strain TAC 125)).